The chain runs to 146 residues: Large ribosomal subunit protein uL13 (146 aa).

This sequence belongs to the universal ribosomal protein uL13 family. As to quaternary structure, part of the 50S ribosomal subunit.

Its function is as follows. This protein is one of the early assembly proteins of the 50S ribosomal subunit, although it is not seen to bind rRNA by itself. It is important during the early stages of 50S assembly. The chain is Large ribosomal subunit protein uL13 from Borreliella burgdorferi (strain ATCC 35210 / DSM 4680 / CIP 102532 / B31) (Borrelia burgdorferi).